The following is a 911-amino-acid chain: Viral IRF4-like protein (911 aa).

Residues 7–114 (SEWATLWIID…GSYVVWQLVR (108 aa)) constitute a DNA-binding region (IRF tryptophan pentad repeat). Disordered stretches follow at residues 147–184 (TTAT…PRKS), 211–302 (ASTS…SRLP), 494–537 (GGAP…PYVC), and 681–727 (ELQE…FFDP). Over residues 211–221 (ASTSGMGSSGT) the composition is skewed to low complexity. Polar residues-rich tracts occupy residues 222–231 (RQVTQASSFT) and 495–505 (GAPNQGLSHTQ). Basic residues predominate over residues 697–710 (RRPRSRSPHGRRTP).

It belongs to the IRF family. In terms of assembly, interacts with host MDM2; this interaction facilitates the proteasomal degradation of TP53/p53. Interacts with host IRF7; this interaction prevents IRF7 dimerization and subsequent activation.

The protein localises to the host nucleus. Functionally, plays a role in host cell apoptosis modulation by promoting TP53/p53 ubiquitination and subsequent degradation and thus down-regulating TP53/p53-mediated apoptosis. Works as a potential viral transcription factor to modulate host gene expression to build favorable environments for the viral lytic life cycle and greatly accelerates the induction of an immediate early gene RTA, early genes ORF36 and ORF57, late genes ORF25 and ORF64, and latent genes LANA1 and v-IRF3. Inhibits host interferon-alpha production by interacting with host IRF7 and preventing IRF7 dimerization. The polypeptide is Viral IRF4-like protein (vIRF-4) (Homo sapiens (Human)).